The following is a 43-amino-acid chain: Protein PsbN (43 aa).

A helical membrane pass occupies residues 7–27 (VAIFISGLLVSFTGYALYTAF).

It belongs to the PsbN family.

The protein resides in the plastid. Its subcellular location is the chloroplast thylakoid membrane. Its function is as follows. May play a role in photosystem I and II biogenesis. The sequence is that of Protein PsbN from Daucus carota (Wild carrot).